The primary structure comprises 160 residues: Putative NrdI-like protein (160 aa).

It belongs to the NrdI family.

The sequence is that of Putative NrdI-like protein from Streptococcus pyogenes serotype M6 (strain ATCC BAA-946 / MGAS10394).